Consider the following 598-residue polypeptide: UvrABC system protein C (598 aa).

Residues aspartate 14–isoleucine 91 enclose the GIY-YIG domain. In terms of domain architecture, UVR spans aspartate 196–methionine 231.

The protein belongs to the UvrC family. Interacts with UvrB in an incision complex.

It localises to the cytoplasm. The UvrABC repair system catalyzes the recognition and processing of DNA lesions. UvrC both incises the 5' and 3' sides of the lesion. The N-terminal half is responsible for the 3' incision and the C-terminal half is responsible for the 5' incision. The sequence is that of UvrABC system protein C from Streptococcus pyogenes serotype M1.